We begin with the raw amino-acid sequence, 91 residues long: RNA-binding protein Hfq (91 aa).

The region spanning 9–68 is the Sm domain; that stretch reads DPYLNALRRERIPVSIYLVNGIKLQGQIESFDQFVILLKNTVNQMVYKHAISTVVPARSV. The disordered stretch occupies residues 68 to 91; that stretch reads VSHHNNNHHTTPTEAVENVETQAE.

The protein belongs to the Hfq family. Homohexamer.

RNA chaperone that binds small regulatory RNA (sRNAs) and mRNAs to facilitate mRNA translational regulation in response to envelope stress, environmental stress and changes in metabolite concentrations. Also binds with high specificity to tRNAs. The polypeptide is RNA-binding protein Hfq (Haemophilus influenzae (strain 86-028NP)).